The chain runs to 1444 residues: Probable serine/threonine-protein kinase irlC (1444 aa).

The interval 335 to 370 (TLINNNNNNNNNNNNNNNNNNNNNNNNNNNNNNNSK) is disordered. Residues 338-368 (NNNNNNNNNNNNNNNNNNNNNNNNNNNNNNN) are compositionally biased toward low complexity. Residues 495 to 529 (FTFYLSFGEIFTCSCEDYKREFSCKHMFFILLNYY) form an SWIM-type zinc finger. Over residues 584-613 (TSPFQSINNNNNNNLNNNNNNNLNNNNNNE) the composition is skewed to low complexity. Disordered regions lie at residues 584–619 (TSPF…NKFK) and 864–938 (QKEK…ITPI). 2 coiled-coil regions span residues 593–620 (NNNN…KFKE) and 847–879 (IKAE…KSKI). Residues 864 to 876 (QKEKKKQKQKQSK) are compositionally biased toward basic residues. Residues 885–937 (SSSSSSSSSPSTSNTTITSTTPTTTTTTTTTTTPTTTTTTTTTSSPKQKPITP) show a composition bias toward low complexity. Residues 981-1246 (RKEENVLGRG…IEKILLHPFF (266 aa)) form the Protein kinase domain. ATP contacts are provided by residues 987-995 (LGRGSNGTL) and K1010. The active-site Proton acceptor is the D1116. The KEN domain maps to 1279-1444 (NYQEINLKNN…LIYFNDLIIK (166 aa)).

Belongs to the protein kinase superfamily. Ser/Thr protein kinase family.

It carries out the reaction L-seryl-[protein] + ATP = O-phospho-L-seryl-[protein] + ADP + H(+). It catalyses the reaction L-threonyl-[protein] + ATP = O-phospho-L-threonyl-[protein] + ADP + H(+). The chain is Probable serine/threonine-protein kinase irlC (irlC) from Dictyostelium discoideum (Social amoeba).